Consider the following 802-residue polypeptide: Ent-copalyl diphosphate synthase, chloroplastic (802 aa).

The transit peptide at 1–60 directs the protein to the chloroplast; it reads MSLQYHVLNSIPSTTFLSSTKTTISSSFLTISGSPLNVARDKSRSGSIHCSKLRTQEYIN. Residue lysine 245 participates in substrate binding. Residues aspartate 377 and aspartate 379 each coordinate Mg(2+). Positions 377–380 match the DXDD motif motif; that stretch reads DIDD. Substrate is bound at residue lysine 463.

Belongs to the terpene synthase family. Tpsc subfamily. Requires Mg(2+) as cofactor. Post-translationally, the N-terminus is blocked. Expressed in roots, leaves, flowers and also in siliques.

It is found in the plastid. Its subcellular location is the chloroplast. It catalyses the reaction (2E,6E,10E)-geranylgeranyl diphosphate = ent-copalyl diphosphate. The protein operates within plant hormone biosynthesis; gibberellin biosynthesis. Its activity is regulated as follows. Inhibited by high concentrations of magnesium. In terms of biological role, catalyzes the conversion of geranylgeranyl diphosphate to the gibberellin precursor ent-copalyl diphosphate. In Arabidopsis thaliana (Mouse-ear cress), this protein is Ent-copalyl diphosphate synthase, chloroplastic (GA1).